We begin with the raw amino-acid sequence, 397 residues long: DNA-directed RNA polymerase subunit Rpo1C (397 aa).

It belongs to the RNA polymerase beta' chain family. In terms of assembly, part of the RNA polymerase complex.

The protein resides in the cytoplasm. It catalyses the reaction RNA(n) + a ribonucleoside 5'-triphosphate = RNA(n+1) + diphosphate. Functionally, DNA-dependent RNA polymerase (RNAP) catalyzes the transcription of DNA into RNA using the four ribonucleoside triphosphates as substrates. Forms part of the jaw domain. The protein is DNA-directed RNA polymerase subunit Rpo1C of Methanococcus aeolicus (strain ATCC BAA-1280 / DSM 17508 / OCM 812 / Nankai-3).